Here is an 89-residue protein sequence, read N- to C-terminus: Otospiralin (89 aa).

An N-terminal signal peptide occupies residues 1 to 21 (MQACMVPGLALCLLLGPLAGA).

The protein belongs to the otospiralin family. In terms of tissue distribution, ear specific.

The protein resides in the secreted. Its function is as follows. May be essential for the survival of the neurosensory epithelium of the inner ear. The chain is Otospiralin (OTOS) from Homo sapiens (Human).